A 417-amino-acid polypeptide reads, in one-letter code: Hydrogen cyanide synthase subunit HcnC (417 aa).

The signal sequence occupies residues 1–18; that stretch reads MIKHYDVVIAGGGVIGAS. Position 7–21 (7–21) interacts with FAD; sequence VVIAGGGVIGASCAY. Cys-19 carries the N-palmitoyl cysteine lipid modification. Cys-19 carries the S-diacylglycerol cysteine lipid modification. The chain crosses the membrane as a helical span at residues 46-66; that stretch reads SAGGLWAIGESVGLGCGVIFF.

Belongs to the FAD-dependent glycerol-3-phosphate dehydrogenase family. As to quaternary structure, heterotrimer of HcnA, HcnB and HcnC.

It is found in the cell membrane. The catalysed reaction is glycine + 2 A = hydrogen cyanide + 2 AH2 + CO2. Its function is as follows. A three-component membrane-bound flavoenzyme that catalyzes the formation of hydrogen cyanide, a secondary metabolite, by transfer of electrons to a cyanide-resistant branch of the aerobic respiratory chain. Contributes to suppression of black root rot of tobacco. The chain is Hydrogen cyanide synthase subunit HcnC from Pseudomonas protegens (strain DSM 19095 / LMG 27888 / CFBP 6595 / CHA0).